Reading from the N-terminus, the 1075-residue chain is DNA-directed RNA polymerase subunit beta (1075 aa).

Belongs to the RNA polymerase beta chain family. In terms of assembly, in plastids the minimal PEP RNA polymerase catalytic core is composed of four subunits: alpha, beta, beta', and beta''. When a (nuclear-encoded) sigma factor is associated with the core the holoenzyme is formed, which can initiate transcription.

It is found in the plastid. It localises to the chloroplast. The catalysed reaction is RNA(n) + a ribonucleoside 5'-triphosphate = RNA(n+1) + diphosphate. In terms of biological role, DNA-dependent RNA polymerase catalyzes the transcription of DNA into RNA using the four ribonucleoside triphosphates as substrates. In Oryza sativa (Rice), this protein is DNA-directed RNA polymerase subunit beta.